We begin with the raw amino-acid sequence, 462 residues long: Argininosuccinate lyase (462 aa).

It belongs to the lyase 1 family. Argininosuccinate lyase subfamily.

The protein localises to the cytoplasm. The catalysed reaction is 2-(N(omega)-L-arginino)succinate = fumarate + L-arginine. Its pathway is amino-acid biosynthesis; L-arginine biosynthesis; L-arginine from L-ornithine and carbamoyl phosphate: step 3/3. The sequence is that of Argininosuccinate lyase from Streptococcus agalactiae serotype Ia (strain ATCC 27591 / A909 / CDC SS700).